A 214-amino-acid chain; its full sequence is Cytochrome b (214 aa).

The next 4 membrane-spanning stretches (helical) occupy residues 31–51 (FGSM…FLAF), 75–96 (WIMQ…YIHI), 111–131 (WVSG…GYVL), and 176–196 (FFAL…IHIL). 2 residues coordinate heme b: His-81 and His-95. Residues His-180 and His-194 each coordinate heme b. His-199 provides a ligand contact to a ubiquinone.

It belongs to the cytochrome b family. As to quaternary structure, the cytochrome bc1 complex contains 3 respiratory subunits (MT-CYB, CYC1 and UQCRFS1), 2 core proteins (UQCRC1 and UQCRC2) and probably 6 low-molecular weight proteins. The cofactor is heme b.

It is found in the mitochondrion inner membrane. Component of the ubiquinol-cytochrome c reductase complex (complex III or cytochrome b-c1 complex) that is part of the mitochondrial respiratory chain. The b-c1 complex mediates electron transfer from ubiquinol to cytochrome c. Contributes to the generation of a proton gradient across the mitochondrial membrane that is then used for ATP synthesis. In Gloydius blomhoffii (Mamushi), this protein is Cytochrome b (MT-CYB).